A 296-amino-acid chain; its full sequence is Pantothenate synthetase (296 aa).

Residue 30–37 (MGNLHEGH) coordinates ATP. The active-site Proton donor is His-37. Gln-61 provides a ligand contact to (R)-pantoate. Gln-61 contacts beta-alanine. Residue 149-152 (GEKD) coordinates ATP. Gln-155 serves as a coordination point for (R)-pantoate. Residues Val-178 and 186-189 (MSSR) each bind ATP.

The protein belongs to the pantothenate synthetase family. Homodimer.

It is found in the cytoplasm. The catalysed reaction is (R)-pantoate + beta-alanine + ATP = (R)-pantothenate + AMP + diphosphate + H(+). Its pathway is cofactor biosynthesis; (R)-pantothenate biosynthesis; (R)-pantothenate from (R)-pantoate and beta-alanine: step 1/1. Its function is as follows. Catalyzes the condensation of pantoate with beta-alanine in an ATP-dependent reaction via a pantoyl-adenylate intermediate. The chain is Pantothenate synthetase from Vibrio atlanticus (strain LGP32) (Vibrio splendidus (strain Mel32)).